The sequence spans 363 residues: MSMTAGNVVFVGNIPYDVSEQQMTEIFNQVGPVKTFKLVLDPETGSGKGYGFCEFFDSETTAMAVRKLNNSELGPRKIRVEFPSNDPRRNQSYEYTERTDRYMEQQNAHESSYNSRFIPPVLHSTSSLPASQGGGMPSPAIYSSSMATNLNKNINSTSVPAYNFHNSMTSDFDSASQPHTDAYNARTFQYNKSSQNKGDYTSGTSISNPTSIPLAPSVVQVLSTFSAQELLNMLSKLQTVVHIAPEEARRLLIANPALPYAAFQAMLLMNLVDANVLQQVVVAVKNKNMHQPASATSSPPSVPQKIPSSNHKSQQANGSDQGNEGKRMALIQQLLALTPEQINALPPAQRDQILSIRRQHFRQ.

The 79-residue stretch at 7–85 (NVVFVGNIPY…RKIRVEFPSN (79 aa)) folds into the RRM domain. Residues 291–325 (QPASATSSPPSVPQKIPSSNHKSQQANGSDQGNEG) are disordered. The span at 306–322 (IPSSNHKSQQANGSDQG) shows a compositional bias: polar residues.

In terms of assembly, interacts with res2.

Its subcellular location is the nucleus. Its function is as follows. Component of the cleavage factor I (CF I) involved in pre-mRNA 3'-end processing. This chain is Cleavage and termination factor 1 (ctf1), found in Schizosaccharomyces pombe (strain 972 / ATCC 24843) (Fission yeast).